A 161-amino-acid chain; its full sequence is Phosphopantetheine adenylyltransferase (161 aa).

A substrate-binding site is contributed by Thr-10. Residues 10 to 11 (TF) and His-18 each bind ATP. Substrate-binding residues include Lys-42, Leu-74, and Arg-88. ATP contacts are provided by residues 89 to 91 (GLR), Glu-99, and 124 to 130 (NSFISST).

Belongs to the bacterial CoaD family. In terms of assembly, homohexamer. It depends on Mg(2+) as a cofactor.

It is found in the cytoplasm. The enzyme catalyses (R)-4'-phosphopantetheine + ATP + H(+) = 3'-dephospho-CoA + diphosphate. It participates in cofactor biosynthesis; coenzyme A biosynthesis; CoA from (R)-pantothenate: step 4/5. Reversibly transfers an adenylyl group from ATP to 4'-phosphopantetheine, yielding dephospho-CoA (dPCoA) and pyrophosphate. The polypeptide is Phosphopantetheine adenylyltransferase (Photobacterium profundum (strain SS9)).